The chain runs to 561 residues: MRLWKSMAWGILLWHSQSGALCPAWPPARAAEEITRLQQQLADWNDIYWKQGVSAVDDSVYDQLSARLVQWQRCVGQDVSSTPVSPPLNGTTMHPVAHTGVRKLADRQVVEQWMRGRSELWVQPKVDGVAVTLVYQNGKLARAISRGNGLQGEDWTPKIRLIPSIPQSTQGALANAVLQGEIFLQREGHIQQRMGGMNARSKVAGMLMRQDNASALNSLGIFIWAWPDGPANMPERLSQLAKAGFSLTKKYSLVVKDASEVERARQSWLTSALPFVTDGVVIRMAKEPASQYWRPGQGDWLAAWKYPPVAQVAQVSAIQFSVGKSGKITVVASLVPVILDDKRVQRVNIGSVKRWEAWDIAPGDQILVSLAGQGIPRLDEVVWRSRERSKPVPPDSHFNSLTCFYASATCQEQFISRLIWLGSRSALGLDGMGEASWRALHQTHRFEHIFSWLTLTSAQIANTPGFAKGKSEQIWRQFNLARRQPFTRWIMAMDIPLTQAALQASGDRSWEQLLMRTEQHWRQLPATGERRAGRVIDWRNNLQIKALSRWLAAQHIPGFGS.

The active-site N6-AMP-lysine intermediate is lysine 125.

The protein belongs to the NAD-dependent DNA ligase family. LigB subfamily.

It carries out the reaction NAD(+) + (deoxyribonucleotide)n-3'-hydroxyl + 5'-phospho-(deoxyribonucleotide)m = (deoxyribonucleotide)n+m + AMP + beta-nicotinamide D-nucleotide.. Functionally, catalyzes the formation of phosphodiester linkages between 5'-phosphoryl and 3'-hydroxyl groups in double-stranded DNA using NAD as a coenzyme and as the energy source for the reaction. This chain is DNA ligase B, found in Salmonella newport (strain SL254).